The primary structure comprises 409 residues: Ubiquitin-associated domain-containing protein 1 (409 aa).

The residue at position 1 (Met-1) is an N-acetylmethionine. The region spanning Leu-14–Ser-98 is the Ubiquitin-like domain. Residues Pro-101 to Asp-122 are disordered. A compositionally biased stretch (basic and acidic residues) spans Ala-108–Asp-122. One can recognise a UBA 1 domain in the interval Asp-187–His-231. Positions Thr-239–Glu-273 are disordered. Over residues Ala-245 to Ser-268 the composition is skewed to low complexity. The region spanning Arg-292–Asp-332 is the UBA 2 domain. The STI1 domain maps to Asn-357–Met-396.

In terms of assembly, component of the KPC complex composed of RNF123/KPC1 and UBAC1/KPC2. Interacts (via ubiquitin-like domain) with RNF123. Interacts (via ubiquitin-like and UBA domains) with the proteasome via its N-terminal domain.

It localises to the cytoplasm. The protein operates within protein modification; protein ubiquitination. Its function is as follows. Non-catalytic component of the KPC complex, a E3 ubiquitin-protein ligase complex that mediates polyubiquitination of target proteins, such as CDKN1B and NFKB1. The KPC complex catalyzes polyubiquitination and proteasome-mediated degradation of CDKN1B during G1 phase of the cell cycle. The KPC complex also acts as a key regulator of the NF-kappa-B signaling by promoting maturation of the NFKB1 component of NF-kappa-B by catalyzing ubiquitination of the NFKB1 p105 precursor. Within the KPC complex, UBAC1 acts as an adapter that promotes the transfer of target proteins that have been polyubiquitinated by RNF123/KPC1 to the 26S proteasome. The polypeptide is Ubiquitin-associated domain-containing protein 1 (Ubac1) (Mus musculus (Mouse)).